A 243-amino-acid polypeptide reads, in one-letter code: 1-(5-phosphoribosyl)-5-[(5-phosphoribosylamino)methylideneamino] imidazole-4-carboxamide isomerase (243 aa).

Asp8 functions as the Proton acceptor in the catalytic mechanism. Residue Asp130 is the Proton donor of the active site.

Belongs to the HisA/HisF family.

The protein resides in the cytoplasm. The catalysed reaction is 1-(5-phospho-beta-D-ribosyl)-5-[(5-phospho-beta-D-ribosylamino)methylideneamino]imidazole-4-carboxamide = 5-[(5-phospho-1-deoxy-D-ribulos-1-ylimino)methylamino]-1-(5-phospho-beta-D-ribosyl)imidazole-4-carboxamide. It participates in amino-acid biosynthesis; L-histidine biosynthesis; L-histidine from 5-phospho-alpha-D-ribose 1-diphosphate: step 4/9. This Acinetobacter baumannii (strain AB307-0294) protein is 1-(5-phosphoribosyl)-5-[(5-phosphoribosylamino)methylideneamino] imidazole-4-carboxamide isomerase.